A 268-amino-acid polypeptide reads, in one-letter code: Thiazole synthase (268 aa).

The active-site Schiff-base intermediate with DXP is Lys-96. 1-deoxy-D-xylulose 5-phosphate is bound by residues Gly-157, 185–186 (AG), and 207–208 (NT). Positions 238–268 (PMRPREAASPSSPVEGVPFTPTGPRPGRGPQ) are disordered. The segment covering 258 to 268 (PTGPRPGRGPQ) has biased composition (pro residues).

Belongs to the ThiG family. As to quaternary structure, homotetramer. Forms heterodimers with either ThiH or ThiS.

The protein localises to the cytoplasm. The catalysed reaction is [ThiS sulfur-carrier protein]-C-terminal-Gly-aminoethanethioate + 2-iminoacetate + 1-deoxy-D-xylulose 5-phosphate = [ThiS sulfur-carrier protein]-C-terminal Gly-Gly + 2-[(2R,5Z)-2-carboxy-4-methylthiazol-5(2H)-ylidene]ethyl phosphate + 2 H2O + H(+). It participates in cofactor biosynthesis; thiamine diphosphate biosynthesis. In terms of biological role, catalyzes the rearrangement of 1-deoxy-D-xylulose 5-phosphate (DXP) to produce the thiazole phosphate moiety of thiamine. Sulfur is provided by the thiocarboxylate moiety of the carrier protein ThiS. In vitro, sulfur can be provided by H(2)S. This is Thiazole synthase from Thermus thermophilus (strain ATCC 27634 / DSM 579 / HB8).